We begin with the raw amino-acid sequence, 355 residues long: Elongation factor Ts (355 aa).

Residues 82-85 (TDFV) form an involved in Mg(2+) ion dislocation from EF-Tu region.

It belongs to the EF-Ts family.

The protein resides in the cytoplasm. Associates with the EF-Tu.GDP complex and induces the exchange of GDP to GTP. It remains bound to the aminoacyl-tRNA.EF-Tu.GTP complex up to the GTP hydrolysis stage on the ribosome. In Helicobacter pylori (strain G27), this protein is Elongation factor Ts.